Here is a 286-residue protein sequence, read N- to C-terminus: NAD kinase (286 aa).

Asp-67 serves as the catalytic Proton acceptor. Residues 67-68 (DG), Arg-72, 141-142 (ND), Arg-152, Asp-171, 182-187 (TAYSLS), and Gln-242 each bind NAD(+).

The protein belongs to the NAD kinase family. A divalent metal cation serves as cofactor.

It localises to the cytoplasm. The catalysed reaction is NAD(+) + ATP = ADP + NADP(+) + H(+). In terms of biological role, involved in the regulation of the intracellular balance of NAD and NADP, and is a key enzyme in the biosynthesis of NADP. Catalyzes specifically the phosphorylation on 2'-hydroxyl of the adenosine moiety of NAD to yield NADP. The polypeptide is NAD kinase (Ruminiclostridium cellulolyticum (strain ATCC 35319 / DSM 5812 / JCM 6584 / H10) (Clostridium cellulolyticum)).